We begin with the raw amino-acid sequence, 528 residues long: NAD(P)H-quinone oxidoreductase chain 4 1 (528 aa).

14 helical membrane passes run 7 to 27 (FPWL…IPLI), 32 to 52 (WVRW…AYVF), 86 to 106 (LSLP…VAAW), 114 to 134 (LFFF…LAQD), 136 to 156 (LLFF…ISIW), 168 to 188 (FILY…AMAF), 208 to 228 (ALEL…LPIF), 242 to 262 (SAPI…YGLI), 276 to 296 (FAPV…LAAF), 310 to 330 (IAHM…GING), 331 to 351 (AVLQ…LTGI), 375 to 395 (FALF…SGFV), 417 to 437 (GIAL…LSML), and 463 to 483 (MAVA…PRLA).

This sequence belongs to the complex I subunit 4 family.

The protein localises to the cellular thylakoid membrane. It carries out the reaction a plastoquinone + NADH + (n+1) H(+)(in) = a plastoquinol + NAD(+) + n H(+)(out). The catalysed reaction is a plastoquinone + NADPH + (n+1) H(+)(in) = a plastoquinol + NADP(+) + n H(+)(out). Functionally, NDH-1 shuttles electrons from NAD(P)H, via FMN and iron-sulfur (Fe-S) centers, to quinones in the respiratory chain. The immediate electron acceptor for the enzyme in this species is believed to be plastoquinone. Couples the redox reaction to proton translocation (for every two electrons transferred, four hydrogen ions are translocated across the cytoplasmic membrane), and thus conserves the redox energy in a proton gradient. The sequence is that of NAD(P)H-quinone oxidoreductase chain 4 1 from Synechococcus sp. (strain JA-2-3B'a(2-13)) (Cyanobacteria bacterium Yellowstone B-Prime).